We begin with the raw amino-acid sequence, 753 residues long: Protein transport protein SEC23-1 (753 aa).

Zn(2+)-binding residues include cysteine 56, cysteine 61, cysteine 80, and cysteine 83.

Belongs to the SEC23/SEC24 family. SEC23 subfamily. In terms of assembly, the COPII coat is composed of at least 5 proteins: the SEC23/24 complex, the SEC13/31 complex, and the protein SAR1.

It is found in the cytoplasm. The protein resides in the cytoplasmic vesicle. The protein localises to the COPII-coated vesicle membrane. It localises to the endoplasmic reticulum membrane. Its subcellular location is the golgi apparatus membrane. Component of the coat protein complex II (COPII) which promotes the formation of transport vesicles from the endoplasmic reticulum (ER). The coat has two main functions, the physical deformation of the endoplasmic reticulum membrane into vesicles and the selection of cargo molecules. The protein is Protein transport protein SEC23-1 (SEC231) of Candida glabrata (strain ATCC 2001 / BCRC 20586 / JCM 3761 / NBRC 0622 / NRRL Y-65 / CBS 138) (Yeast).